The following is an 82-amino-acid chain: Defensin-like protein 75 (82 aa).

Residues 1-26 form the signal peptide; sequence MAKIKSLDVITVAIILLLVIADQATA. 4 disulfides stabilise this stretch: cysteine 33–cysteine 66, cysteine 37–cysteine 55, cysteine 41–cysteine 64, and cysteine 45–cysteine 65.

The protein belongs to the DEFL family.

The protein localises to the secreted. This chain is Defensin-like protein 75 (LCR45), found in Arabidopsis thaliana (Mouse-ear cress).